Consider the following 318-residue polypeptide: Magnetosome protein MamM (318 aa).

The tract at residues 1-210 (MRKSGCTVCS…FMDAYRGLMD (210 aa)) is transmembrane domain (TMD). 4 helical membrane passes run 13–33 (IGWVGLAVNTVLMVMKAFVGL), 39–59 (AMLADAMYSLKDMLNALMVVI), 81–101 (FILSMVVSVVFIGLTGYLLVH), and 117–137 (LIVLWAALVSVGVNVAMYFYS). Residues 211-318 (HTAGEAVQNR…DEVMLSKVDN (108 aa)) form a C-terminal domain (CTD) region. Residues aspartate 249, histidine 264, histidine 285, and glutamate 289 each coordinate Fe cation.

This sequence belongs to the cation diffusion facilitator (CDF) transporter (TC 2.A.4) family. As to quaternary structure, forms homodimers via its C-terminal domain (CTD) in the presence of metal cations. Interacts with MamB via their CTD.

The protein resides in the magnetosome membrane. The protein localises to the cell inner membrane. In terms of biological role, probably plays a role in biomineralization. Required for stable accumulation of MamB. Probably binds and transports iron. May nucleate iron crystal formation. The chain is Magnetosome protein MamM (mamM) from Paramagnetospirillum magneticum (strain ATCC 700264 / AMB-1) (Magnetospirillum magneticum).